A 346-amino-acid chain; its full sequence is 3 beta-hydroxysteroid dehydrogenase/Delta 5--&gt;4-isomerase (346 aa).

Catalysis depends on Y147, which acts as the Proton acceptor. K151 serves as a coordination point for NAD(+).

Belongs to the 3-beta-HSD family.

It carries out the reaction a 3beta-hydroxy-Delta(5)-steroid + NAD(+) = a 3-oxo-Delta(5)-steroid + NADH + H(+). The catalysed reaction is a 3-oxo-Delta(5)-steroid = a 3-oxo-Delta(4)-steroid. The protein operates within lipid metabolism; steroid biosynthesis. Its function is as follows. Catalyzes the oxidative conversion of Delta(5)-ene-3-beta-hydroxy steroid, and the oxidative conversion of ketosteroids. The 3-beta-HSD enzymatic system plays a crucial role in the biosynthesis of all classes of hormonal steroids. During viral infection, steroid production contributes to virulence by inhibiting the host inflammatory response. This chain is 3 beta-hydroxysteroid dehydrogenase/Delta 5--&gt;4-isomerase (OPG174), found in Homo sapiens (Human).